Here is a 356-residue protein sequence, read N- to C-terminus: Tyrosine recombinase XerS (356 aa).

The 106-residue stretch at 16–121 folds into the Core-binding (CB) domain; it reads VMPWYVLDYY…ALSSLYKYLT (106 aa). The Tyr recombinase domain maps to 169–354; the sequence is AFLDYVDKEY…VNDEQKNALD (186 aa). Residues R210, K234, H306, R309, and H332 contribute to the active site. Residue Y341 is the O-(3'-phospho-DNA)-tyrosine intermediate of the active site.

Belongs to the 'phage' integrase family. XerS subfamily.

It is found in the cytoplasm. Its activity is regulated as follows. FtsK is required for recombination. Functionally, site-specific tyrosine recombinase, which acts by catalyzing the cutting and rejoining of the recombining DNA molecules. Essential to convert dimers of the bacterial chromosome into monomers to permit their segregation at cell division. The sequence is that of Tyrosine recombinase XerS from Streptococcus pyogenes serotype M28 (strain MGAS6180).